The primary structure comprises 398 residues: Secreted aspartic protease 2 (398 aa).

Positions 1 to 18 are cleaved as a signal peptide; it reads MFLKNIFIALAIALLVDA. A propeptide spans 19 to 56 (activation peptide); sequence TPTTTKRSAGFVALDFSVVKTPKAFPVTNGQEGKTSKR. One can recognise a Peptidase A1 domain in the interval 70-384; it reads YAADITVGSN…DLDDNEISLA (315 aa). Residue D88 is part of the active site. Pepstatin A is bound at residue 88–90; sequence DTG. Residues C103 and C115 are joined by a disulfide bond. A pepstatin A-binding site is contributed by 141-142; the sequence is GD. Residues D247 and D270 each coordinate Zn(2+). D274 is an active-site residue. 274 to 278 lines the pepstatin A pocket; it reads DSGTT. A disulfide bridge links C312 with C350. Residues N313 and N321 are each glycosylated (N-linked (GlcNAc...) asparagine).

Belongs to the peptidase A1 family. Monomer.

It localises to the secreted. The catalysed reaction is Preferential cleavage at the carboxyl of hydrophobic amino acids, but fails to cleave 15-Leu-|-Tyr-16, 16-Tyr-|-Leu-17 and 24-Phe-|-Phe-25 of insulin B chain. Activates trypsinogen, and degrades keratin.. Its function is as follows. Secreted aspartic peptidases (SAPs) are a group of ten acidic hydrolases considered as key virulence factors. These enzymes supply the fungus with nutrient amino acids as well as are able to degrade the selected host's proteins involved in the immune defense. Induces host inflammatory cytokine production in a proteolytic activity-independent way. Plays a role in tissue damage during superficial infection. Moreover, acts toward human hemoglobin though limited proteolysis to generate a variety of antimicrobial hemocidins, enabling to compete with the other microorganisms of the same physiological niche using the microbicidal peptides generated from the host protein. Plays a key role in defense against host by cleaving histatin-5 (Hst 5), a peptide from human saliva that carries out fungicidal activity. The cleavage rate decreases in an order of SAP2 &gt; SAP9 &gt; SAP3 &gt; SAP7 &gt; SAP4 &gt; SAP1 &gt; SAP8. The first cleavage occurs between residues 'Lys-17' and 'His-18' of Hst 5, giving DSHAKRHHGYKRKFHEK and HHSHRGY peptides. Simultaneously, the DSHAKRHHGYKRK peptide is also formed. Further fragmentation by SAP2 results in FHEK and DSHAKRHHGY products. In Candida albicans (strain SC5314 / ATCC MYA-2876) (Yeast), this protein is Secreted aspartic protease 2.